Reading from the N-terminus, the 241-residue chain is Transforming protein p29 (241 aa).

Residues 1 to 41 form a disordered region; that stretch reads MPAARAAPAADEPMRDPVAPVRAPALPRPAPGAVAPASGGA. 2 S-palmitoyl cysteine; by host lipidation sites follow: cysteine 233 and cysteine 236. Residue cysteine 238 is modified to Cysteine methyl ester; by host. Cysteine 238 carries the S-farnesyl cysteine; by host lipid modification. A propeptide spans 239 to 241 (removed in mature form); sequence VLS.

This sequence belongs to the small GTPase superfamily. Ras family.

The protein localises to the host cell membrane. It catalyses the reaction GTP + H2O = GDP + phosphate + H(+). Its activity is regulated as follows. Alternates between an inactive form bound to GDP and an active form bound to GTP. Activated by a guanine nucleotide-exchange factor (GEF) and inactivated by a GTPase-activating protein (GAP). The polypeptide is Transforming protein p29 (H-RAS) (Mus musculus (Mouse)).